Reading from the N-terminus, the 329-residue chain is 7,8-didemethyl-8-hydroxy-5-deazariboflavin synthase (329 aa).

A Radical SAM core domain is found at 6 to 244; it reads ITYTKNVFLP…EEISIQVAPN (239 aa). [4Fe-4S] cluster contacts are provided by C20, C24, and C27.

The protein belongs to the radical SAM superfamily. CofG family. In terms of assembly, consists of two subunits, CofG and CofH. [4Fe-4S] cluster serves as cofactor.

The catalysed reaction is 5-amino-5-(4-hydroxybenzyl)-6-(D-ribitylimino)-5,6-dihydrouracil + S-adenosyl-L-methionine = 7,8-didemethyl-8-hydroxy-5-deazariboflavin + 5'-deoxyadenosine + L-methionine + NH4(+) + H(+). The protein operates within cofactor biosynthesis; coenzyme F0 biosynthesis. In terms of biological role, catalyzes the radical-mediated synthesis of 7,8-didemethyl-8-hydroxy-5-deazariboflavin from 5-amino-5-(4-hydroxybenzyl)-6-(D-ribitylimino)-5,6-dihydrouracil. The sequence is that of 7,8-didemethyl-8-hydroxy-5-deazariboflavin synthase from Methanoregula boonei (strain DSM 21154 / JCM 14090 / 6A8).